A 642-amino-acid polypeptide reads, in one-letter code: Rhotekin-2 (642 aa).

One can recognise an REM-1 domain in the interval 30–105 (IKRKKIRESM…AQKRTGHQDF (76 aa)). One can recognise a PH domain in the interval 306–413 (LDMMSGFLSQ…WLDSLWQHIY (108 aa)). Disordered stretches follow at residues 505–563 (TVLS…GRPS) and 575–642 (LQKS…PKAW). Basic and acidic residues-rich tracts occupy residues 597 to 615 (PEKRAEESDLPEYTKKEYI) and 632 to 642 (SFREKMNPKAW).

The protein is Rhotekin-2 (rtkn2) of Danio rerio (Zebrafish).